The primary structure comprises 606 residues: MAVPGPTARAGARPRLDLQLVQRFVRIQKVFFPSWSSQNVLMFMTLLCVTLLEQLVIYQVGLIPSQYYGVLGNKDLDGFKALTLLAVTLIVLNSTLKSFDQFTCNLLYVSWRKDLTEHLHHLYFRARVYYTLNVLRDDIDNPDQRISQDVERFCRQLSSVTSKLIISPFTLTYYTYQCFQSTGWLGPVSIFGYFIVGTMVNKTLMGPIVTKLVQQEKLEGDFRFKHMQIRVNAEPAAFYRAGLVEHMRTDRRLQRLLQTQRELMSRELWLYIGINTFDYLGSILSYVVIAIPIFSGVYGDLSPTELSTLVSKNAFVCIYLISCFTQLIDLSTTLSDVAGYTHRIGELQEALLDMSRKSQDCEALGESEWDLDKTPGCPTTEPSDTAFLLDRVSILAPSSDKPLIKDLSLKICEGQSLLITGNTGTGKTSLLRVLGGLWEGMKGSVQMLADFGPHGVLFLPQKPFFTDGTLREQVIYPLKEIYPDSGSADDERIVRFLELAGLSSLVARTGGLDQQVDWNWYDVLSPGEMQRLSFARLFYLQPKYAVLDEATSALTEEAESELYRIGQQLGMTFISVGHRPSLEKFHSWVLRLHGGGSWELTRIKLE.

One can recognise an ABC transmembrane type-1 domain in the interval 39-332 (NVLMFMTLLC…CFTQLIDLST (294 aa)). 5 helical membrane passes run 43–63 (FMTL…VGLI), 76–96 (LDGF…NSTL), 190–210 (IFGY…PIVT), 279–299 (YLGS…GVYG), and 314–334 (AFVC…STTL). Residues 389–603 (LDRVSILAPS…GGGSWELTRI (215 aa)) enclose the ABC transporter domain. 421–428 (GNTGTGKT) lines the ATP pocket.

This sequence belongs to the ABC transporter superfamily. ABCD family. Peroxisomal fatty acyl CoA transporter (TC 3.A.1.203) subfamily. Homodimer or heterodimer. Interacts with LMBRD1; this interaction induces the translocation of ABCD4 from the ER to the lysosome membrane. Interacts with LMBRD1 and MMACHC; this interaction ensures the transport of cobalamin from the lysosome to the cytosol.

It is found in the endoplasmic reticulum membrane. It localises to the lysosome membrane. It carries out the reaction an R-cob(III)alamin(out) + ATP + H2O = an R-cob(III)alamin(in) + ADP + phosphate + H(+). Lysosomal membrane protein that transports cobalamin (Vitamin B12) from the lysosomal lumen to the cytosol in an ATP-dependent manner. Targeted by LMBRD1 lysosomal chaperone from the endoplasmic reticulum to the lysosomal membrane. Then forms a complex with lysosomal chaperone LMBRD1 and cytosolic MMACHC to transport cobalamin across the lysosomal membrane. This Mus musculus (Mouse) protein is Lysosomal cobalamin transporter ABCD4.